A 3336-amino-acid chain; its full sequence is Pericentrin (3336 aa).

Disordered stretches follow at residues Met1–Lys71 and Gly81–Asp100. Positions Thr27 to Lys37 are enriched in basic and acidic residues. Residue Ser44 is modified to Phosphoserine. Position 188 is a phosphoserine (Ser188). Thr191 carries the post-translational modification Phosphothreonine. The stretch at His258 to Leu553 forms a coiled coil. Residues Lys569–Ser589 form a disordered region. 2 positions are modified to phosphoserine: Ser610 and Ser682. Coiled coils occupy residues Thr675–His835 and Thr1010–Ala1146. Residue Ser1245 is modified to Phosphoserine. Residues Asn1299–Arg1949 adopt a coiled-coil conformation. Positions Thr1619 to Glu1638 are disordered. Over residues Pro1626–Gly1636 the composition is skewed to pro residues. A phosphoserine mark is found at Ser1653 and Ser1712. A disordered region spans residues Arg1954–Ala1974. Ser2044 carries the phosphoserine modification. The stretch at Val2064–Tyr2082 forms a coiled coil. Positions Ser2168–Ser2214 are disordered. Residues Ser2177, Ser2192, Ser2225, Ser2226, and Ser2327 each carry the phosphoserine modification. Residues Gln2186–Leu2197 are compositionally biased toward polar residues. Positions Ser2318–Arg2374 are disordered. Positions Gly2334–Asp2343 are enriched in basic and acidic residues. Ser2352, Ser2355, Ser2477, and Ser2486 each carry phosphoserine. The stretch at Gln2536–Lys3086 forms a coiled coil. Disordered regions lie at residues Leu2875 to Trp2910 and Leu3084 to His3126. Basic and acidic residues-rich tracts occupy residues Glu2876 to Glu2896 and Arg3092 to Glu3102. Positions Leu2983 to Thr3246 are interaction with NEK2. A calmodulin-binding region spans residues Arg3195–Arg3208. A disordered region spans residues Ala3224–Glu3300. Over residues Ala3226–Pro3240 the composition is skewed to low complexity. The segment covering Pro3283–Gln3297 has biased composition (polar residues). Residue Ser3302 is modified to Phosphoserine.

In terms of assembly, interacts with CHD3. Interacts with CHD4; the interaction regulates centrosome integrity. Interacts with DISC1 and PCM1. Binds calmodulin. Interacts with CDK5RAP2; the interaction is leading to centrosomal localization of PCNT and CDK5RAP2. Interacts with isoform 1 of NEK2. Interacts with CEP131. Interacts with CCDC13. Interacts with CEP68. Interacts with ATF5; the ATF5:PCNT:polyglutamylated tubulin (PGT) tripartite unites the mother centriole and the pericentriolar material (PCM) in the centrosome. In terms of processing, cleaved during mitotis which leads to removal of CDK5RAP2 from the centrosome and promotes centriole disengagement and subsequent centriole separation. The C-terminal fragment is rapidly degraded following cleavage. Post-translationally, ubiquitinated by TRIM43; leading to proteasomal degradation. Expressed in all tissues tested, including placenta, liver, kidney and thymus.

It is found in the cytoplasm. Its subcellular location is the cytoskeleton. The protein localises to the microtubule organizing center. It localises to the centrosome. Its function is as follows. Integral component of the filamentous matrix of the centrosome involved in the initial establishment of organized microtubule arrays in both mitosis and meiosis. Plays a role, together with DISC1, in the microtubule network formation. Is an integral component of the pericentriolar material (PCM). May play an important role in preventing premature centrosome splitting during interphase by inhibiting NEK2 kinase activity at the centrosome. In Homo sapiens (Human), this protein is Pericentrin (PCNT).